Reading from the N-terminus, the 139-residue chain is Ubiquitin-conjugating enzyme spm2 (139 aa).

Positions 5–139 (PRNFKLLEEL…PQPPEGSTFF (135 aa)) constitute a UBC core domain.

It belongs to the ubiquitin-conjugating enzyme family. As to quaternary structure, heterodimer with ubc13.

Functionally, has a role in the DNA error-free postreplication repair (PRR) pathway. Lacks catalytic activity by itself. The ubc13/spm2 heterodimer catalyzes the synthesis of non-canonical poly-ubiquitin chains that are linked through 'Lys-63'. The chain is Ubiquitin-conjugating enzyme spm2 (spm2) from Schizosaccharomyces pombe (strain 972 / ATCC 24843) (Fission yeast).